The following is a 120-amino-acid chain: Large ribosomal subunit protein bL17 (120 aa).

It belongs to the bacterial ribosomal protein bL17 family. In terms of assembly, part of the 50S ribosomal subunit. Contacts protein L32.

This is Large ribosomal subunit protein bL17 from Mycoplasmopsis pulmonis (strain UAB CTIP) (Mycoplasma pulmonis).